Consider the following 182-residue polypeptide: UPF0149 protein HI_0817 (182 aa).

This sequence belongs to the UPF0149 family.

This is UPF0149 protein HI_0817 from Haemophilus influenzae (strain ATCC 51907 / DSM 11121 / KW20 / Rd).